Here is a 194-residue protein sequence, read N- to C-terminus: Mitochondrial import inner membrane translocase subunit Tim22 (194 aa).

2 cysteine pairs are disulfide-bonded: cysteine 69–cysteine 141 and cysteine 160–cysteine 179. 3 consecutive transmembrane segments (helical) span residues 74-94 (VLAC…TAGI), 123-143 (MSYA…ECLV), and 170-190 (AGVK…AAID).

Belongs to the Tim17/Tim22/Tim23 family. Component of the TIM22 complex, whose core is composed of TIMM22, associated with peripheral protein FXC1/TIMM10B and the 70 kDa heterohexamer. In most cases, the 70 kDa complex is composed of TIMM9 and TIMM10 (TIMM10A or TIMM10B). A small fraction of the 70 kDa complex is composed of TIMM8 (TIMM8A/DDP1 or TIMM8B/DDP2) and TIMM13. The TIM22 complex also contains AGK and TIMM29. Interacts directly with TIMM9, TIMM10A and FXC1/TIMM10B. Interacts (when oxidized) with TIMM29; interaction is direct. Post-translationally, disulfide bonds promote efficient assembly of the TIM22 complex.

It localises to the mitochondrion inner membrane. In terms of biological role, essential core component of the TIM22 complex, a complex that mediates the import and insertion of multi-pass transmembrane proteins into the mitochondrial inner membrane. In the TIM22 complex, it constitutes the voltage-activated and signal-gated channel. Forms a twin-pore translocase that uses the membrane potential as external driving force in 2 voltage-dependent steps. The protein is Mitochondrial import inner membrane translocase subunit Tim22 (Timm22) of Mus musculus (Mouse).